Consider the following 199-residue polypeptide: Probable GTP-binding protein EngB (199 aa).

Residues 28-199 (DLPEIALAGR…DSWDAILEQV (172 aa)) form the EngB-type G domain. Residues 36 to 43 (GRSNVGKS), 63 to 67 (GKTQL), 81 to 84 (DVPG), 148 to 151 (TKAD), and 180 to 182 (FSS) each bind GTP. Positions 43 and 65 each coordinate Mg(2+).

The protein belongs to the TRAFAC class TrmE-Era-EngA-EngB-Septin-like GTPase superfamily. EngB GTPase family. Requires Mg(2+) as cofactor.

Its function is as follows. Necessary for normal cell division and for the maintenance of normal septation. The chain is Probable GTP-binding protein EngB from Streptococcus pyogenes serotype M28 (strain MGAS6180).